The sequence spans 1582 residues: Dynein axonemal assembly factor 1 homolog (1582 aa).

6 LRR repeats span residues arginine 38–threonine 60, glutamate 61–threonine 82, lysine 83–arginine 104, glutamate 105–isoleucine 126, valine 129–valine 150, and threonine 154–glutamate 175. In terms of domain architecture, LRRCT spans proline 189–tryptophan 227. 11 disordered regions span residues alanine 245–aspartate 420, serine 560–glutamine 587, phenylalanine 859–arginine 878, aspartate 913–alanine 942, serine 1073–arginine 1092, methionine 1101–glycine 1137, threonine 1150–glycine 1218, lysine 1305–aspartate 1345, leucine 1358–threonine 1438, glutamate 1484–asparagine 1517, and proline 1529–glutamine 1548. Low complexity predominate over residues glutamate 313–alanine 327. Positions histidine 339–threonine 392 are enriched in basic and acidic residues. Polar residues predominate over residues threonine 409–aspartate 420. Residues glutamate 572–methionine 582 are compositionally biased toward acidic residues. Residues serine 928–alanine 942 are compositionally biased toward acidic residues. Basic and acidic residues-rich tracts occupy residues leucine 1078 to arginine 1092 and arginine 1103 to glutamate 1125. Residues glutamate 1166 to serine 1178 are compositionally biased toward low complexity. Composition is skewed to basic and acidic residues over residues proline 1321–threonine 1335, serine 1398–glutamate 1427, and glutamate 1484–asparagine 1514. Acidic residues predominate over residues proline 1529–glutamate 1540.

This sequence belongs to the DNAAF1 family.

Its subcellular location is the cell projection. It localises to the cilium. Its function is as follows. Cilium-specific protein required for cilia structures. In Drosophila pseudoobscura pseudoobscura (Fruit fly), this protein is Dynein axonemal assembly factor 1 homolog (dtr).